The chain runs to 66 residues: UPF0337 protein bsl1473 (66 aa).

This sequence belongs to the UPF0337 (CsbD) family.

The sequence is that of UPF0337 protein bsl1473 from Bradyrhizobium diazoefficiens (strain JCM 10833 / BCRC 13528 / IAM 13628 / NBRC 14792 / USDA 110).